The chain runs to 286 residues: Diaminopimelate epimerase (286 aa).

Substrate is bound by residues asparagine 13 and asparagine 66. Cysteine 75 acts as the Proton donor in catalysis. Substrate is bound by residues 76–77, asparagine 165, asparagine 198, and 216–217; these read GN and ER. Cysteine 225 (proton acceptor) is an active-site residue. 226-227 contributes to the substrate binding site; it reads GT.

This sequence belongs to the diaminopimelate epimerase family. Homodimer.

The protein localises to the cytoplasm. It catalyses the reaction (2S,6S)-2,6-diaminopimelate = meso-2,6-diaminopimelate. Its pathway is amino-acid biosynthesis; L-lysine biosynthesis via DAP pathway; DL-2,6-diaminopimelate from LL-2,6-diaminopimelate: step 1/1. Its function is as follows. Catalyzes the stereoinversion of LL-2,6-diaminopimelate (L,L-DAP) to meso-diaminopimelate (meso-DAP), a precursor of L-lysine and an essential component of the bacterial peptidoglycan. In Oceanobacillus iheyensis (strain DSM 14371 / CIP 107618 / JCM 11309 / KCTC 3954 / HTE831), this protein is Diaminopimelate epimerase.